A 410-amino-acid chain; its full sequence is Secreted protein PRY1 (410 aa).

Residues 1–20 form the signal peptide; that stretch reads MKQNYILSIILCYLLANVHS. Disordered regions lie at residues 64 to 86, 102 to 132, and 148 to 260; these read PAPVASPAAPAPASSAPQSSTPS, SDSDSSSGSDTASAAPASTSPQSSSSSSSSS, and SSSS…SSSS. A compositionally biased stretch (low complexity) spans 148 to 179; that stretch reads SSSSTPSSISQQQQQQQGSPASGSNSPNSAQP. The span at 197–211 shows a compositional bias: gly residues; it reads SGLGSGFGSGFGSGS. The segment covering 212–260 has biased composition (low complexity); the sequence is GSDSDSGSGLPSASSSTIIQQQPSSSNIGSSSTSSSSSSSSSSSSSSSS. Residues 283 to 394 enclose the SCP domain; the sequence is LDAHNKYRAQ…NWGLYVVCEY (112 aa).

This sequence belongs to the CRISP family.

The protein localises to the secreted. In terms of biological role, secreted protein that acts as a virulence factor during infections. In Candida albicans (strain SC5314 / ATCC MYA-2876) (Yeast), this protein is Secreted protein PRY1 (PRY1).